A 157-amino-acid chain; its full sequence is Endoribonuclease YbeY (157 aa).

Residues His-121, His-125, and His-131 each coordinate Zn(2+).

This sequence belongs to the endoribonuclease YbeY family. It depends on Zn(2+) as a cofactor.

Its subcellular location is the cytoplasm. Functionally, single strand-specific metallo-endoribonuclease involved in late-stage 70S ribosome quality control and in maturation of the 3' terminus of the 16S rRNA. The sequence is that of Endoribonuclease YbeY from Salinispora tropica (strain ATCC BAA-916 / DSM 44818 / JCM 13857 / NBRC 105044 / CNB-440).